Consider the following 78-residue polypeptide: Large ribosomal subunit protein bL28 (78 aa).

It belongs to the bacterial ribosomal protein bL28 family.

The polypeptide is Large ribosomal subunit protein bL28 (rpmB) (Treponema pallidum (strain Nichols)).